Reading from the N-terminus, the 691-residue chain is DNA ligase (691 aa).

NAD(+)-binding positions include 36–40 (DAEYD), 85–86 (SL), and Glu118. Lys120 acts as the N6-AMP-lysine intermediate in catalysis. NAD(+) is bound by residues Arg141, Glu178, Lys295, and Lys319. Zn(2+) is bound by residues Cys413, Cys416, Cys431, and Cys437. Positions 595-684 (GRPQPLAGQT…ESASSEDAQP (90 aa)) constitute a BRCT domain.

Belongs to the NAD-dependent DNA ligase family. LigA subfamily. Requires Mg(2+) as cofactor. Mn(2+) is required as a cofactor.

It catalyses the reaction NAD(+) + (deoxyribonucleotide)n-3'-hydroxyl + 5'-phospho-(deoxyribonucleotide)m = (deoxyribonucleotide)n+m + AMP + beta-nicotinamide D-nucleotide.. Its function is as follows. DNA ligase that catalyzes the formation of phosphodiester linkages between 5'-phosphoryl and 3'-hydroxyl groups in double-stranded DNA using NAD as a coenzyme and as the energy source for the reaction. It is essential for DNA replication and repair of damaged DNA. This chain is DNA ligase, found in Chromohalobacter salexigens (strain ATCC BAA-138 / DSM 3043 / CIP 106854 / NCIMB 13768 / 1H11).